Consider the following 65-residue polypeptide: Conotoxin TsMRCL-04 (65 aa).

The first 20 residues, 1–20, serve as a signal peptide directing secretion; that stretch reads MRCLPVFIILLLLIPSAASA. The propeptide occupies 21–48; the sequence is AQPETKDDAALASFYDNAKRTLQRHWAK. Glutamic acid 1-amide is present on Glu-63.

It belongs to the conotoxin T superfamily. In terms of processing, contains 2 disulfide bonds that can be either 'C1-C3, C2-C4' or 'C1-C4, C2-C3', since these disulfide connectivities have been observed for conotoxins with cysteine framework V (for examples, see AC P0DQQ7 and AC P81755). As to expression, expressed by the venom duct.

Its subcellular location is the secreted. This Conus tessulatus (Tessellate cone) protein is Conotoxin TsMRCL-04.